Here is a 367-residue protein sequence, read N- to C-terminus: Glutamate 5-kinase (367 aa).

Lys-9 serves as a coordination point for ATP. Positions 49, 136, and 148 each coordinate substrate. ATP contacts are provided by residues 168–169 (TD) and 210–216 (TGGMKSK). The PUA domain maps to 276-350 (SGQIEVDAGA…GMQSQDIQVR (75 aa)).

Belongs to the glutamate 5-kinase family.

The protein resides in the cytoplasm. It catalyses the reaction L-glutamate + ATP = L-glutamyl 5-phosphate + ADP. It participates in amino-acid biosynthesis; L-proline biosynthesis; L-glutamate 5-semialdehyde from L-glutamate: step 1/2. Catalyzes the transfer of a phosphate group to glutamate to form L-glutamate 5-phosphate. This chain is Glutamate 5-kinase, found in Bacillus cereus (strain ATCC 14579 / DSM 31 / CCUG 7414 / JCM 2152 / NBRC 15305 / NCIMB 9373 / NCTC 2599 / NRRL B-3711).